A 394-amino-acid polypeptide reads, in one-letter code: NAD(P)H-quinone oxidoreductase subunit H (394 aa).

It belongs to the complex I 49 kDa subunit family. NDH-1 can be composed of about 15 different subunits; different subcomplexes with different compositions have been identified which probably have different functions.

It is found in the cellular thylakoid membrane. The catalysed reaction is a plastoquinone + NADH + (n+1) H(+)(in) = a plastoquinol + NAD(+) + n H(+)(out). It catalyses the reaction a plastoquinone + NADPH + (n+1) H(+)(in) = a plastoquinol + NADP(+) + n H(+)(out). In terms of biological role, NDH-1 shuttles electrons from an unknown electron donor, via FMN and iron-sulfur (Fe-S) centers, to quinones in the respiratory and/or the photosynthetic chain. The immediate electron acceptor for the enzyme in this species is believed to be plastoquinone. Couples the redox reaction to proton translocation, and thus conserves the redox energy in a proton gradient. Cyanobacterial NDH-1 also plays a role in inorganic carbon-concentration. This chain is NAD(P)H-quinone oxidoreductase subunit H, found in Synechococcus sp. (strain RCC307).